Reading from the N-terminus, the 198-residue chain is N-acetyltransferase 9-like protein (198 aa).

Residues 34–178 form the N-acetyltransferase domain; it reads EEIRRLTGSE…KEITMELPGE (145 aa).

This sequence belongs to the acetyltransferase family. GNAT subfamily.

This Caenorhabditis briggsae protein is N-acetyltransferase 9-like protein.